The chain runs to 360 residues: Xanthohumol 4-O-methyltransferase (360 aa).

S-adenosyl-L-methionine is bound at residue Asp227. The Proton acceptor role is filled by His266.

Belongs to the class I-like SAM-binding methyltransferase superfamily. Cation-independent O-methyltransferase family. In terms of assembly, homodimer. Highly expressed in lupulin glands. Detected in cones, male flowers and roots.

The protein resides in the cytoplasm. The catalysed reaction is xanthohumol + S-adenosyl-L-methionine = 4-O-methylxanthohumol + S-adenosyl-L-homocysteine + H(+). The enzyme catalyses desmethylxanthohumol + S-adenosyl-L-methionine = xanthohumol + S-adenosyl-L-homocysteine + H(+). It carries out the reaction isoliquiritigenin + S-adenosyl-L-methionine = 2'-O-methylisoliquiritigenin + S-adenosyl-L-homocysteine + H(+). It catalyses the reaction trans-resveratrol + S-adenosyl-L-methionine = 3-methoxy-4',5-dihydroxy-trans-stilbene + S-adenosyl-L-homocysteine + H(+). The protein operates within secondary metabolite biosynthesis. With respect to regulation, inhibited by S-adenosyl homocysteine. Involved in the biosynthesis of prenylated phenolics natural products which contribute to the bitter taste of beer and display broad biological activities. O-methyltransferase with a low substrate selectivity. Methylates chalconaringenin, desmethylxanthohumol, xanthohumol, isoliquiritigenin, butein, 2',4-dihydroxychalcone, resveratrol, genistein and guaiacol. Catalyzes the biosynthesis of 2',4'-dihydroxy-4,6'-dimethoxy-3'-prenylchalcone (4-O-methylxanthohumol). The protein is Xanthohumol 4-O-methyltransferase of Humulus lupulus (European hop).